The following is a 669-amino-acid chain: Potassium voltage-gated channel subfamily KQT member 1 (669 aa).

At 1-120 (MDTASSPPNA…YNFLERPTGW (120 aa)) the chain is on the cytoplasmic side. Phosphoserine; by PKA is present on serine 27. A helical membrane pass occupies residues 121–142 (KCFVYHFTVFLIVLVCLIFSVL). The Extracellular segment spans residues 143–153 (STIEQYAALAT). The helical transmembrane segment at 154–176 (GTLFWMEIVLVVFFGTEYVVRLW) threads the bilayer. At 177 to 192 (SAGCRSKYVGIWGRLR) the chain is on the cytoplasmic side. The helical transmembrane segment at 193-218 (FARKPISIIDLIVVVASMVVLCVGSK) threads the bilayer. Residues 219–226 (GQVFATSA) lie on the Extracellular side of the membrane. A helical; Voltage-sensor membrane pass occupies residues 227 to 242 (IRGIRFLQILRMLHVD). Positions 238 to 246 (MLHVDRQGG) are interaction with KCNE3. Residues 243-260 (RQGGTWRLLGSVVFIHRQ) lie on the Cytoplasmic side of the membrane. Position 244 (glutamine 244) interacts with a 1,2-diacyl-sn-glycero-3-phospho-(1D-myo-inositol-4,5-bisphosphate). A helical transmembrane segment spans residues 261–283 (ELITTLYIGFLGLIFSSYFVYLA). The Extracellular portion of the chain corresponds to 284–299 (EKDAVNESGRIEFGSY). An N-linked (GlcNAc...) asparagine glycan is attached at asparagine 289. Positions 300 to 320 (ADALWWGVVTVTTIGYGDKVP) form an intramembrane region, pore-forming. Residues 321–322 (QT) lie on the Extracellular side of the membrane. The chain crosses the membrane as a helical span at residues 323 to 348 (WVGKTIASCFSVFAISFFALPAGILG). Residues 349–669 (SGFALKVQQK…VPQTGPDEGS (321 aa)) are Cytoplasmic-facing. The tract at residues 370–382 (AAASLIQTAWRCY) is interaction with CALM. Phosphoserine occurs at positions 407 and 409. Residues 515-529 (KVIRRMQYFVAKKKF) form an interaction with CALM; calcium-dependent region. The interaction with KCNE1 C-terminus stretch occupies residues 535–572 (PYDVRDVIEQYSQGHLNLMVRIKELQRRLDQSIGKPSL). Residues 585–621 (SNTIGARLNRVEDKVTQLDQRLVIITDMLHQLLSLQQ) are a coiled coil. The segment at 588 to 616 (IGARLNRVEDKVTQLDQRLVIITDMLHQL) is interaction with AKAP9. Residues 589–620 (GARLNRVEDKVTQLDQRLVIITDMLHQLLSLQ) form a C-terminal assembly domain (tetramerization) region.

This sequence belongs to the potassium channel family. KQT (TC 1.A.1.15) subfamily. Kv7.1/KCNQ1 sub-subfamily. Tetramer. Heterotetramer with KCNE1; targets to the membrane raft. Interacts (via C-terminus) with CALM; forms a heterooctameric structure (with 4:4 KCNQ1:CALM stoichiometry) in a calcium-independent manner. Interacts with AKAP9; targets protein kinase A (PKA) catalytic and regulatory subunits and protein phosphatase 1 (PP1) to the KCNQ1-KCNE1 complex, allowing PKA-mediated phosphorylation and increase of delayed rectifier potassium channel activity. Interacts with KCNE2; form a heterooligomer complex that targets to the membrane raft and leading to currents with an apparently instantaneous activation, a rapid deactivation process and a linear current-voltage relationship and decreases the amplitude of the outward current. Interacts with AP2M1; mediates estrogen-induced internalization via clathrin-coated vesicles. Interacts with NEDD4L; promotes internalization and decreases I(Ks) currents. Interacts with USP2; counteracts the NEDD4L-specific down-regulation of I(Ks) and restore plasma membrane localization. Heterotetramer with KCNQ5; has a voltage-gated potassium channel activity. Interacts with KCNE3; produces a current with nearly instantaneous activation with a linear current-voltage relationship and alters membrane raft localization. Interacts with KCNE4; impairs KCNQ1 localization in lipid rafts and inhibits voltage-gated potassium channel activity. Interacts with KCNE5; impairs KCNQ1 localization in lipid rafts and only conducts current upon strong and continued depolarization. Interacts with SLC5A3; forms coregulatory channel-transporter complexes that modulate Na(+)-coupled myo-inositol influx through the transporter. Post-translationally, phosphorylation at Ser-27 by PKA; increases delayed rectifier potassium channel activity of the KCNQ1-KCNE1 complex through a macromolecular complex that includes PKA, PP1, and the targeting protein AKAP9. In terms of processing, ubiquitinated by NEDD4L; promotes internalization. The ubiquitinylated form is internalized through a clathrin-mediated endocytosis by interacting with AP2M1 and is recycled back to the cell membrane via RAB4A and RAB11A. Deubiquitinated by USP2; counteracts the NEDD4L-specific down-regulation of I(Ks) and restores the membrane localization.

It localises to the cell membrane. The protein resides in the cytoplasmic vesicle membrane. The protein localises to the early endosome. Its subcellular location is the membrane raft. It is found in the endoplasmic reticulum. It localises to the basolateral cell membrane. The protein resides in the apical cell membrane. It carries out the reaction K(+)(in) = K(+)(out). With respect to regulation, PIP2 molecule is essential to activate KCNQ channels by inducing the coupling of the voltage-sensing domain (VSD) and the pore-forming domain (PD). Upon channel activation, PIP2 disrupts the VSD-calmodulin/CALM interactions, causing the release of CALM from the VSD which triggers the opening of the gate. Calcium potentiates KCNQ1 channel current through calcium-bound CALM. Calcium-bound CALM competes with PIP2 to stabilize the channel open state. Its function is as follows. Pore-forming subunit of the voltage-gated potassium (Kv) channel involved in the regulation of cardiomyocyte excitability and important in normal development and functions of myocardium, inner ear, stomach and colon. Associates with KCNE beta subunits that modulates current kinetics. Induces a voltage-dependent by rapidly activating and slowly deactivating potassium-selective outward current. Also promotes a delayed voltage activated potassium current showing outward rectification characteristic. During beta-adrenergic receptor stimulation participates in cardiac repolarization by associating with KCNE1 to form the I(Ks) cardiac potassium current that increases the amplitude and slows down the activation kinetics of outward potassium current I(Ks). Muscarinic agonist oxotremorine-M strongly suppresses KCNQ1/KCNE1 current. When associated with KCNE3, forms the potassium channel that is important for cyclic AMP-stimulated intestinal secretion of chloride ions. This interaction with KCNE3 is reduced by 17beta-estradiol, resulting in the reduction of currents. During conditions of increased substrate load, maintains the driving force for proximal tubular and intestinal sodium ions absorption, gastric acid secretion, and cAMP-induced jejunal chloride ions secretion. Allows the provision of potassium ions to the luminal membrane of the secretory canaliculus in the resting state as well as during stimulated acid secretion. When associated with KCNE2, forms a heterooligomer complex leading to currents with an apparently instantaneous activation, a rapid deactivation process and a linear current-voltage relationship and decreases the amplitude of the outward current. When associated with KCNE4, inhibits voltage-gated potassium channel activity. When associated with KCNE5, this complex only conducts current upon strong and continued depolarization. Also forms a heterotetramer with KCNQ5 that has a voltage-gated potassium channel activity. Binds with phosphatidylinositol 4,5-bisphosphate. KCNQ1-KCNE2 channel associates with Na(+)-coupled myo-inositol symporter in the apical membrane of choroid plexus epithelium and regulates the myo-inositol gradient between blood and cerebrospinal fluid with an impact on neuron excitability. In Rattus norvegicus (Rat), this protein is Potassium voltage-gated channel subfamily KQT member 1.